A 189-amino-acid chain; its full sequence is Transcriptional repressor NrdR (189 aa).

Residues 3–34 fold into a zinc finger; it reads CPFCRGDDSRVVDSREVEDGQAIRRRRSCSGC. Residues 46–136 enclose the ATP-cone domain; it reads LSVVKRSGVT…VYRAFSSVED (91 aa). Positions 152–189 are disordered; the sequence is RLPEGPEAAQGGPESKAGNGQAAGSGDPEGVKAEKSSE. Residues 180–189 show a composition bias toward basic and acidic residues; the sequence is EGVKAEKSSE.

It belongs to the NrdR family. Zn(2+) serves as cofactor.

Functionally, negatively regulates transcription of bacterial ribonucleotide reductase nrd genes and operons by binding to NrdR-boxes. The sequence is that of Transcriptional repressor NrdR from Saccharopolyspora erythraea (strain ATCC 11635 / DSM 40517 / JCM 4748 / NBRC 13426 / NCIMB 8594 / NRRL 2338).